We begin with the raw amino-acid sequence, 690 residues long: DNA ligase (690 aa).

Residues 36 to 40 (DAVYD), 85 to 86 (SL), and glutamate 124 contribute to the NAD(+) site. The active-site N6-AMP-lysine intermediate is the lysine 126. Residues arginine 147, glutamate 184, lysine 308, and lysine 332 each contribute to the NAD(+) site. Residues cysteine 426, cysteine 429, cysteine 444, and cysteine 449 each contribute to the Zn(2+) site. Residues 614 to 690 (NQSNVFDGKS…INENELKLLL (77 aa)) form the BRCT domain.

This sequence belongs to the NAD-dependent DNA ligase family. LigA subfamily. It depends on Mg(2+) as a cofactor. Mn(2+) serves as cofactor.

It carries out the reaction NAD(+) + (deoxyribonucleotide)n-3'-hydroxyl + 5'-phospho-(deoxyribonucleotide)m = (deoxyribonucleotide)n+m + AMP + beta-nicotinamide D-nucleotide.. Functionally, DNA ligase that catalyzes the formation of phosphodiester linkages between 5'-phosphoryl and 3'-hydroxyl groups in double-stranded DNA using NAD as a coenzyme and as the energy source for the reaction. It is essential for DNA replication and repair of damaged DNA. The protein is DNA ligase of Prochlorococcus marinus (strain NATL1A).